The following is a 458-amino-acid chain: UDP-N-acetylmuramate--L-alanine ligase (458 aa).

115-121 (GSHGKTT) serves as a coordination point for ATP.

It belongs to the MurCDEF family.

It localises to the cytoplasm. The enzyme catalyses UDP-N-acetyl-alpha-D-muramate + L-alanine + ATP = UDP-N-acetyl-alpha-D-muramoyl-L-alanine + ADP + phosphate + H(+). The protein operates within cell wall biogenesis; peptidoglycan biosynthesis. Its function is as follows. Cell wall formation. This chain is UDP-N-acetylmuramate--L-alanine ligase, found in Anaeromyxobacter dehalogenans (strain 2CP-C).